A 338-amino-acid polypeptide reads, in one-letter code: Methionine import ATP-binding protein MetN 1 (338 aa).

The 240-residue stretch at 2-241 (IQLENIEKHY…PNEKLTKDFI (240 aa)) folds into the ABC transporter domain. Residue 38 to 45 (GYSGAGKS) participates in ATP binding.

It belongs to the ABC transporter superfamily. Methionine importer (TC 3.A.1.24) family. As to quaternary structure, the complex is composed of two ATP-binding proteins (MetN), two transmembrane proteins (MetI) and a solute-binding protein (MetQ).

The protein localises to the cell membrane. It catalyses the reaction L-methionine(out) + ATP + H2O = L-methionine(in) + ADP + phosphate + H(+). The enzyme catalyses D-methionine(out) + ATP + H2O = D-methionine(in) + ADP + phosphate + H(+). Functionally, part of the ABC transporter complex MetNIQ involved in methionine import. Responsible for energy coupling to the transport system. The protein is Methionine import ATP-binding protein MetN 1 of Oceanobacillus iheyensis (strain DSM 14371 / CIP 107618 / JCM 11309 / KCTC 3954 / HTE831).